We begin with the raw amino-acid sequence, 228 residues long: 5'-methylthioadenosine/S-adenosylhomocysteine nucleosidase (228 aa).

Catalysis depends on Glu-11, which acts as the Proton acceptor. Substrate-binding positions include Gly-77, Ile-151, and 172–173; that span reads ME. Asp-196 acts as the Proton donor in catalysis.

The protein belongs to the PNP/UDP phosphorylase family. MtnN subfamily.

The enzyme catalyses S-adenosyl-L-homocysteine + H2O = S-(5-deoxy-D-ribos-5-yl)-L-homocysteine + adenine. It carries out the reaction S-methyl-5'-thioadenosine + H2O = 5-(methylsulfanyl)-D-ribose + adenine. It catalyses the reaction 5'-deoxyadenosine + H2O = 5-deoxy-D-ribose + adenine. Its pathway is amino-acid biosynthesis; L-methionine biosynthesis via salvage pathway; S-methyl-5-thio-alpha-D-ribose 1-phosphate from S-methyl-5'-thioadenosine (hydrolase route): step 1/2. Its function is as follows. Catalyzes the irreversible cleavage of the glycosidic bond in both 5'-methylthioadenosine (MTA) and S-adenosylhomocysteine (SAH/AdoHcy) to adenine and the corresponding thioribose, 5'-methylthioribose and S-ribosylhomocysteine, respectively. Also cleaves 5'-deoxyadenosine, a toxic by-product of radical S-adenosylmethionine (SAM) enzymes, into 5-deoxyribose and adenine. In Staphylococcus aureus (strain MRSA252), this protein is 5'-methylthioadenosine/S-adenosylhomocysteine nucleosidase.